The primary structure comprises 332 residues: Phospho-N-acetylmuramoyl-pentapeptide-transferase (332 aa).

8 helical membrane-spanning segments follow: residues 9-29 (IYTI…IIPF), 55-75 (TIGG…AGLI), 79-99 (LWVA…DDFI), 115-135 (MSLQ…ISVM), 155-175 (IPQY…VVVA), 196-216 (IVAA…LAIF), 253-273 (AVAI…IYFA), and 312-332 (VVIV…LGLN).

Belongs to the glycosyltransferase 4 family. MraY subfamily. Mg(2+) serves as cofactor.

The protein localises to the cell membrane. It catalyses the reaction UDP-N-acetyl-alpha-D-muramoyl-L-alanyl-gamma-D-glutamyl-meso-2,6-diaminopimeloyl-D-alanyl-D-alanine + di-trans,octa-cis-undecaprenyl phosphate = di-trans,octa-cis-undecaprenyl diphospho-N-acetyl-alpha-D-muramoyl-L-alanyl-D-glutamyl-meso-2,6-diaminopimeloyl-D-alanyl-D-alanine + UMP. It functions in the pathway cell wall biogenesis; peptidoglycan biosynthesis. Catalyzes the initial step of the lipid cycle reactions in the biosynthesis of the cell wall peptidoglycan: transfers peptidoglycan precursor phospho-MurNAc-pentapeptide from UDP-MurNAc-pentapeptide onto the lipid carrier undecaprenyl phosphate, yielding undecaprenyl-pyrophosphoryl-MurNAc-pentapeptide, known as lipid I. In Alkaliphilus oremlandii (strain OhILAs) (Clostridium oremlandii (strain OhILAs)), this protein is Phospho-N-acetylmuramoyl-pentapeptide-transferase.